The chain runs to 476 residues: Serine/threonine-protein kinase Chk1 (476 aa).

The tract at residues 1 to 265 is interaction with CLSPN; it reads MAVPFVEDWD…IPDIKKDRWY (265 aa). The region spanning 9-265 is the Protein kinase domain; sequence WDLVQTLGEG…IPDIKKDRWY (257 aa). Residues 15–23 and Lys-38 each bind ATP; that span reads LGEGAYGEV. Residue Asp-130 is the Proton acceptor of the active site. Lys-132 participates in a covalent cross-link: Glycyl lysine isopeptide (Lys-Gly) (interchain with G-Cter in ubiquitin). Residues 267–331 are disordered; it reads KPLNRGAKRP…RTGLSLWDTG (65 aa). The residue at position 280 (Ser-280) is a Phosphoserine; by PKB/AKT1. The segment covering 280–291 has biased composition (low complexity); sequence SGGMSESSSGFS. Phosphoserine occurs at positions 286, 296, and 301. Residues 298 to 320 are compositionally biased toward polar residues; sequence LDFSPVNNGSSEETVKFSSSQPE. Ser-317 is modified (phosphoserine; by ATM and ATR). A Phosphoserine; by ATR modification is found at Ser-345. The autoinhibitory region stretch occupies residues 391 to 476; that stretch reads QCLKETFEKL…SSQKVWFPVT (86 aa). Residue Lys-436 forms a Glycyl lysine isopeptide (Lys-Gly) (interchain with G-Cter in ubiquitin) linkage. 3 positions are modified to phosphoserine: Ser-463, Ser-467, and Ser-468.

It belongs to the protein kinase superfamily. CAMK Ser/Thr protein kinase family. NIM1 subfamily. Interacts (phosphorylated by ATR) with RAD51. Interacts with and phosphorylates CLSPN, an adapter protein that regulates the ATR-dependent phosphorylation of CHEK1. Interacts with BRCA1. Interacts with and phosphorylates CDC25A, CDC25B and CDC25C. Interacts with FBXO6, which regulates CHEK1. Interacts with PPM1D, which regulates CHEK1 through dephosphorylation. Interacts with TIMELESS; DNA damage-dependent. Interacts with FEM1B; activates CHEK1 in response to stress. Interacts with TLK1. Interacts with XPO1 and YWHAZ. Interacts with CDK5RAP3; antagonizes CHEK1. Post-translationally, phosphorylated by ATR in a RAD17-dependent manner in response to ultraviolet irradiation and inhibition of DNA replication. Phosphorylated by ATM in response to ionizing irradiation. ATM and ATR can both phosphorylate Ser-317 and Ser-345 and this results in enhanced kinase activity. Phosphorylation at Ser-345 induces a change in the conformation of the protein, activates the kinase activity and is a prerequisite for interaction with FBXO6 and subsequent ubiquitination at Lys-436. Phosphorylation at Ser-345 also increases binding to 14-3-3 proteins and promotes nuclear retention. Conversely, dephosphorylation at Ser-345 by PPM1D may contribute to exit from checkpoint mediated cell cycle arrest. Phosphorylation at Ser-280 by AKT1/PKB, may promote mono and/or diubiquitination. Also phosphorylated at undefined residues during mitotic arrest, resulting in decreased activity. In terms of processing, ubiquitinated. Mono or diubiquitination promotes nuclear exclusion. The activated form (phosphorylated on Ser-345) is polyubiquitinated at Lys-436 by some SCF-type E3 ubiquitin ligase complex containing FBXO6 promoting its degradation. Ubiquitination and degradation are required to terminate the checkpoint and ensure that activated CHEK1 does not accumulate as cells progress through S phase, when replication forks encounter transient impediments during normal DNA replication. 'Lys-63'-mediated ubiquitination by TRAF4 at Lys-132 activates cell cycle arrest and activation of DNA repair. Proteolytically cleaved at the C-terminus by SPRTN during normal DNA replication, thereby promoting CHEK1 removal from chromatin and activating the protein kinase activity. Found in all adult tissues tested. Elevated expression in testis, lung and spleen. 15.5 day old embryos show ubiquitous expression with strong expression in brain, liver, kidney, pancreas, intestine, thymus and lung.

It is found in the nucleus. Its subcellular location is the chromosome. The protein resides in the cytoplasm. The protein localises to the cytoskeleton. It localises to the microtubule organizing center. It is found in the centrosome. The enzyme catalyses L-seryl-[protein] + ATP = O-phospho-L-seryl-[protein] + ADP + H(+). It carries out the reaction L-threonyl-[protein] + ATP = O-phospho-L-threonyl-[protein] + ADP + H(+). Its activity is regulated as follows. Activated through phosphorylation predominantly by ATR but also by ATM in response to DNA damage or inhibition of DNA replication. Activation is modulated by several mediators including CLSPN, BRCA1 and FEM1B. Proteolytic cleavage at the C-terminus by SPRTN during normal DNA replication activates the protein kinase activity. Serine/threonine-protein kinase which is required for checkpoint-mediated cell cycle arrest and activation of DNA repair in response to the presence of DNA damage or unreplicated DNA. May also negatively regulate cell cycle progression during unperturbed cell cycles. This regulation is achieved by a number of mechanisms that together help to preserve the integrity of the genome. Recognizes the substrate consensus sequence [R-X-X-S/T]. Binds to and phosphorylates CDC25A, CDC25B and CDC25C. Phosphorylation of CDC25A at 'Ser-178' and 'Thr-507' and phosphorylation of CDC25C at 'Ser-216' creates binding sites for 14-3-3 proteins which inhibit CDC25A and CDC25C. Phosphorylation of CDC25A at 'Ser-76', 'Ser-124', 'Ser-178', 'Ser-279' and 'Ser-293' promotes proteolysis of CDC25A. Phosphorylation of CDC25A at 'Ser-76' primes the protein for subsequent phosphorylation at 'Ser-79', 'Ser-82' and 'Ser-88' by NEK11, which is required for polyubiquitination and degradation of CDCD25A. Inhibition of CDC25 leads to increased inhibitory tyrosine phosphorylation of CDK-cyclin complexes and blocks cell cycle progression. Also phosphorylates NEK6. Binds to and phosphorylates RAD51 at 'Thr-309', which promotes the release of RAD51 from BRCA2 and enhances the association of RAD51 with chromatin, thereby promoting DNA repair by homologous recombination. Phosphorylates multiple sites within the C-terminus of TP53, which promotes activation of TP53 by acetylation and promotes cell cycle arrest and suppression of cellular proliferation. Also promotes repair of DNA cross-links through phosphorylation of FANCE. Binds to and phosphorylates TLK1 at 'Ser-743', which prevents the TLK1-dependent phosphorylation of the chromatin assembly factor ASF1A. This may enhance chromatin assembly both in the presence or absence of DNA damage. May also play a role in replication fork maintenance through regulation of PCNA. May regulate the transcription of genes that regulate cell-cycle progression through the phosphorylation of histones. Phosphorylates histone H3.1 (to form H3T11ph), which leads to epigenetic inhibition of a subset of genes. May also phosphorylate RB1 to promote its interaction with the E2F family of transcription factors and subsequent cell cycle arrest. Phosphorylates SPRTN, promoting SPRTN recruitment to chromatin. Reduces replication stress and activates the G2/M checkpoint, by phosphorylating and inactivating PABIR1/FAM122A and promoting the serine/threonine-protein phosphatase 2A-mediated dephosphorylation and stabilization of WEE1 levels and activity. This chain is Serine/threonine-protein kinase Chk1 (Chek1), found in Mus musculus (Mouse).